Here is a 639-residue protein sequence, read N- to C-terminus: ATP-dependent rRNA helicase spb4 (639 aa).

A Q motif motif is present at residues 14 to 42; sequence WDAVTPPLSEWVLEAMSSMGFARMTPVQA. The Helicase ATP-binding domain maps to 45-249; that stretch reads IPLFMAHKDV…RVGLRNPVKI (205 aa). ATP is bound at residue 58-65; that stretch reads AVTGSGKT. Positions 197–200 match the DEAD box motif; it reads DEAD. The 155-residue stretch at 283-437 folds into the Helicase C-terminal domain; sequence ALKNILSSVQ…SISFSDADAT (155 aa). Disordered stretches follow at residues 531 to 601 and 620 to 639; these read RKEL…ETKE and AAKA…KGFD. A coiled-coil region spans residues 561–624; sequence QNAENKNKKL…RFRQAAAKAE (64 aa). Basic and acidic residues predominate over residues 577–601; the sequence is KLKQEKTKWENMTEEERQKARETKE.

Belongs to the DEAD box helicase family. DDX55/SPB4 subfamily. Component of pre-60S ribosomal complexes.

The protein localises to the nucleus. The protein resides in the nucleolus. It carries out the reaction ATP + H2O = ADP + phosphate + H(+). Functionally, ATP-binding RNA helicase involved in the biogenesis of 60S ribosomal subunits. Binds 90S pre-ribosomal particles and dissociates from pre-60S ribosomal particles after processing of 27SB pre-rRNA. Required for the normal formation of 18S rRNA through the processing of pre-rRNAs at sites A0, A1 and A2, and the normal formation of 25S and 5.8S rRNAs through the processing of pre-rRNAs at sites C1 and C2. This Aspergillus clavatus (strain ATCC 1007 / CBS 513.65 / DSM 816 / NCTC 3887 / NRRL 1 / QM 1276 / 107) protein is ATP-dependent rRNA helicase spb4.